The chain runs to 382 residues: E3 ubiquitin-protein ligase RNF133 (382 aa).

In terms of domain architecture, PA spans 65–167 (SSILKRVAGV…IKGMEILHLI (103 aa)). A helical membrane pass occupies residues 190–210 (YFVSFMIVTTATLAYFTFYHI). An RING-type; atypical zinc finger spans residues 256 to 297 (CVICFEAYKPNEIVRILTCKHFFHKNCIDPWILAHGTCPMCK). The disordered stretch occupies residues 328-382 (TLSPVEEETNYELPPARTSSKVTHVQEHPTSSANAGSQPPEAEETSHPSHGQQVL). Polar residues predominate over residues 344 to 364 (RTSSKVTHVQEHPTSSANAGS).

As to quaternary structure, interacts with E3 ligase UBE2J1. In terms of processing, auto-ubiquitinated. In terms of tissue distribution, expression is testis-specific.

It localises to the endoplasmic reticulum membrane. It carries out the reaction S-ubiquitinyl-[E2 ubiquitin-conjugating enzyme]-L-cysteine + [acceptor protein]-L-lysine = [E2 ubiquitin-conjugating enzyme]-L-cysteine + N(6)-ubiquitinyl-[acceptor protein]-L-lysine.. It functions in the pathway protein modification; protein ubiquitination. Its function is as follows. Has E3 ubiquitin-protein ligase activity. Plays a role in male fecundity through the interaction with the E2 ubituitin-protein ligase UBE2J1. The chain is E3 ubiquitin-protein ligase RNF133 (Rnf133) from Mus musculus (Mouse).